Here is a 164-residue protein sequence, read N- to C-terminus: R-phycoerythrin alpha chain (164 aa).

The (2R,3E)-phycoerythrobilin site is built by C82 and C139.

It belongs to the phycobiliprotein family. Heterodimer of an alpha and a beta chain. Post-translationally, contains two covalently linked bilin chromophores.

It localises to the plastid. Its subcellular location is the chloroplast thylakoid membrane. In terms of biological role, light-harvesting photosynthetic bile pigment-protein from the phycobiliprotein complex. This Pyropia tenera (Nori) protein is R-phycoerythrin alpha chain (cpeA).